Reading from the N-terminus, the 401-residue chain is Formate-dependent phosphoribosylglycinamide formyltransferase (401 aa).

N(1)-(5-phospho-beta-D-ribosyl)glycinamide is bound by residues 27–28 (EL) and glutamate 87. ATP-binding positions include arginine 119, lysine 160, 165–170 (SSGKGQ), 200–203 (EELV), and glutamate 208. The ATP-grasp domain occupies 124-313 (EFAAEEVGVT…QFDLHLRAIL (190 aa)). Residues glutamate 272 and glutamate 284 each coordinate Mg(2+). N(1)-(5-phospho-beta-D-ribosyl)glycinamide contacts are provided by residues aspartate 291, lysine 361, and 368-369 (RR).

The protein belongs to the PurK/PurT family. As to quaternary structure, homodimer.

It carries out the reaction N(1)-(5-phospho-beta-D-ribosyl)glycinamide + formate + ATP = N(2)-formyl-N(1)-(5-phospho-beta-D-ribosyl)glycinamide + ADP + phosphate + H(+). The protein operates within purine metabolism; IMP biosynthesis via de novo pathway; N(2)-formyl-N(1)-(5-phospho-D-ribosyl)glycinamide from N(1)-(5-phospho-D-ribosyl)glycinamide (formate route): step 1/1. Functionally, involved in the de novo purine biosynthesis. Catalyzes the transfer of formate to 5-phospho-ribosyl-glycinamide (GAR), producing 5-phospho-ribosyl-N-formylglycinamide (FGAR). Formate is provided by PurU via hydrolysis of 10-formyl-tetrahydrofolate. The protein is Formate-dependent phosphoribosylglycinamide formyltransferase of Haloquadratum walsbyi (strain DSM 16790 / HBSQ001).